A 395-amino-acid chain; its full sequence is Lipid-A-disaccharide synthase (395 aa).

It belongs to the LpxB family.

The catalysed reaction is a lipid X + a UDP-2-N,3-O-bis[(3R)-3-hydroxyacyl]-alpha-D-glucosamine = a lipid A disaccharide + UDP + H(+). It functions in the pathway bacterial outer membrane biogenesis; LPS lipid A biosynthesis. Functionally, condensation of UDP-2,3-diacylglucosamine and 2,3-diacylglucosamine-1-phosphate to form lipid A disaccharide, a precursor of lipid A, a phosphorylated glycolipid that anchors the lipopolysaccharide to the outer membrane of the cell. In Bordetella avium (strain 197N), this protein is Lipid-A-disaccharide synthase.